Reading from the N-terminus, the 709-residue chain is Protein white (709 aa).

Positions 1 to 35 (MTINTDDQYADGESKTTISSNRRYSTSSFQDQSME) are disordered. Polar residues predominate over residues 15-32 (KTTISSNRRYSTSSFQDQ). One can recognise an ABC transporter domain in the interval 103–348 (FTRQRLVKDF…SQLGIPCPPN (246 aa)). ATP-binding positions include 136-143 (GSSGAGKT) and 292-299 (GMAMKGKT). Residues 457-475 (LLQTAMVASLIGSIYFGQV) form a helical membrane-spanning segment. N-linked (GlcNAc...) asparagine glycosylation occurs at N485. 4 consecutive transmembrane segments (helical) span residues 487 to 507 (SLFL…INVF), 537 to 555 (LPLF…YPMI), 564 to 585 (YLTT…GYLI), and 598 to 616 (VGPP…FLNS). N658 is a glycosylation site (N-linked (GlcNAc...) asparagine). The chain crosses the membrane as a helical span at residues 681 to 700 (LDIGCLFALIVLFRLGALFC).

This sequence belongs to the ABC transporter superfamily. ABCG family. Eye pigment precursor importer (TC 3.A.1.204) subfamily.

It is found in the membrane. May be part of a membrane-spanning permease system necessary for the transport of pigment precursors into pigment cells responsible for eye color. The protein is Protein white (W) of Anopheles albimanus (New world malaria mosquito).